Reading from the N-terminus, the 522-residue chain is Transmembrane protein 213R (522 aa).

The next 2 helical transmembrane spans lie at 33-50 (NTITRLILIASLVLLLFG) and 55-72 (SLYILIIGLIIVIVIYSQ).

It belongs to the IIV-6 213R family.

The protein resides in the membrane. This chain is Transmembrane protein 213R, found in Invertebrate iridescent virus 6 (IIV-6).